The following is a 511-amino-acid chain: Bifunctional purine biosynthesis protein PurH (511 aa).

The MGS-like domain maps to 1–145 (MKRRAIISVS…KNHAYVTAVV (145 aa)).

It belongs to the PurH family.

The enzyme catalyses (6R)-10-formyltetrahydrofolate + 5-amino-1-(5-phospho-beta-D-ribosyl)imidazole-4-carboxamide = 5-formamido-1-(5-phospho-D-ribosyl)imidazole-4-carboxamide + (6S)-5,6,7,8-tetrahydrofolate. The catalysed reaction is IMP + H2O = 5-formamido-1-(5-phospho-D-ribosyl)imidazole-4-carboxamide. It participates in purine metabolism; IMP biosynthesis via de novo pathway; 5-formamido-1-(5-phospho-D-ribosyl)imidazole-4-carboxamide from 5-amino-1-(5-phospho-D-ribosyl)imidazole-4-carboxamide (10-formyl THF route): step 1/1. Its pathway is purine metabolism; IMP biosynthesis via de novo pathway; IMP from 5-formamido-1-(5-phospho-D-ribosyl)imidazole-4-carboxamide: step 1/1. In Anoxybacillus flavithermus (strain DSM 21510 / WK1), this protein is Bifunctional purine biosynthesis protein PurH.